The primary structure comprises 695 residues: MNNYFIGKVLSGHHINNNGNGNTLSRTALTPTNNNVNRGDLVTNGLTPIDNNFIGSNGFIPRNVTRKDPFRKRTTQEFIREWTEWKEKSASLFTAPIVGVITSTLLEALKKLVAGRVLMSLTNLLFPNNSTSTMEEILRATEQYIQEQLDTVTWNRVSQELEGLKNDLRTFNDQIDDFLQNRVGISPLAIIDSINTMQQLFVNRLPQFQVSDDQVLLLPLFAQAVTLHLTFVRDIIINADEWNIPEAQLNTYKRYLKQYVAQYSNYALSTYEEAFRARFYPRNTVENMLEFKTFMTLNVLDLVSMWSLLKYVNLYVSTSANLYNIGDNKVNEGEYSISYWPFFNTYIQTKSNYVLSGVSGYAMRWSYTNPFFGEYIQDHLYNITASYIGGVNGPQIGQQLSTTELDQLVQQQARADIPVDFTQIPINCTLRNPLEVPYYATRFNELTSLGTAGVGGFVRSDVFISNDSVCGLGTNYSSGQTFYPDYYITNISATVQVNGTNTDISPLYFGENRAITSTNGVNKVIAIYNRKTNYDDFTNIRGTIVHEAPTDSTGFTISPLHLDTVNINSYLYIQENYGNNGDSLRVINRAIIKYRLSAARSVIYRLVLRVSGTASSIVAIYENYPVGSANQINTGTDNEGVIDNDSKFIDLIFNTPFSVSGTARELQLQVSGATTSSPLDIMNIILIPINDVPLY.

Belongs to the delta endotoxin family.

Its function is as follows. Binds to the brush border membrane vesicles of scarab larvae and damages the gut wall somehow to allow the vegetative cells of P.popilliae to enter the hemolymph. This Paenibacillus popilliae (Bacillus popilliae) protein is Parasporal crystal protein Cry18Ca (cry18Ca).